The following is a 162-amino-acid chain: ATP synthase subunit delta, mitochondrial (162 aa).

A mitochondrion-targeting transit peptide spans 1 to 24 (MFSVARTAIRGAARPAVRIARRGY).

In terms of assembly, F-type ATP synthases have 2 components, the catalytic core F(1) and the membrane-embedded component F(0), linked together by a central stalk and a peripheral stalk. The central stalk, also called rotor shaft, is often seen as part of F(1). The peripheral stalk is seen as part of F(0). F(0) contains the membrane channel next to the rotor. F-type ATP synthases form dimers but each monomer functions independently in ATP generation. The dimer consists of 17 different polypeptides: ATP1 (subunit alpha, 3 molecules per monomer, part of F(1)), ATP2 (subunit beta, 3 copies per monomer, part of F(1)), ATP3 (subunit gamma, part of the central stalk), ATP4 (subunit b, part of the peripheral stalk), ATP5/OSCP (subunit 5/OSCP, part of the peripheral stalk), ATP6 (subunit a, part of the peripheral stalk), ATP7 (subunit d, part of the peripheral stalk), ATP8 (subunit 8, part of the peripheral stalk), OLI1 (subunit c, part of the rotor, 10 molecules per monomer), ATP14 (subunit h, part of the peripheral stalk), ATP15 (subunit epsilon, part of the central stalk), ATP16 (subunit delta, part of the central stalk), ATP17 (subunit f, part of the peripheral stalk), ATP18 (subunit i/j, part of the peripheral stalk), ATP19 (subunit k, dimer-specific, at interface between monomers), ATP20 (subunit g, at interface between monomers), TIM11 (subunit e, at interface between monomers).

Its subcellular location is the mitochondrion inner membrane. In terms of biological role, mitochondrial membrane ATP synthase (F(1)F(0) ATP synthase or Complex V) produces ATP from ADP in the presence of a proton gradient across the membrane which is generated by electron transport complexes of the respiratory chain. F-type ATP synthases consist of two structural domains, F(1) - containing the extramembraneous catalytic core, and F(0) - containing the membrane proton channel, linked together by a central stalk and a peripheral stalk. During catalysis, ATP synthesis in the catalytic domain of F(1) is coupled via a rotary mechanism of the central stalk subunits to proton translocation. Part of the complex F(1) domain and the central stalk which is part of the complex rotary element. Rotation of the central stalk against the surrounding alpha/ATP1(3)beta/ATP2(3) subunits leads to hydrolysis of ATP in three separate catalytic sites on the beta/ATP2 subunits. This chain is ATP synthase subunit delta, mitochondrial, found in Yarrowia lipolytica (strain CLIB 122 / E 150) (Yeast).